Reading from the N-terminus, the 904-residue chain is Disks large homolog 1 (904 aa).

Residues 4 to 64 (RKQDTQRALH…FYEVTLLDNP (61 aa)) form the L27 domain. The residue at position 115 (Thr-115) is a Phosphothreonine. Residues Ser-122, Ser-138, and Ser-158 each carry the phosphoserine modification. The interaction with SH3 domains stretch occupies residues 162–212 (PTEAVLPSPPTVPVIPVLPVPAENTVILPTIPQANPPPVLVNTDSLETPTY). PDZ domains are found at residues 224–310 (EITL…VKRR), 319–405 (EIKL…VAKP), and 466–546 (KVVL…AQYR). The interval 224–546 (EITLERGNSG…QAVTIVAQYR (323 aa)) is required for interaction with MARCHF2. Ser-232 is subject to Phosphoserine. The residue at position 399 (Tyr-399) is a Phosphotyrosine. A phosphoserine mark is found at Ser-568, Ser-573, Ser-575, Ser-579, Ser-598, Ser-619, Ser-676, Ser-684, Ser-687, Gln-709, and Ser-834. One can recognise an SH3 domain in the interval 581–651 (KRSLYVRALF…PSKRRVEKKE (71 aa)). Residues 662-693 (SKTRDKGEIPDDMGSKGLKHVTSNASDSESSY) are disordered. A compositionally biased stretch (polar residues) spans 682–693 (VTSNASDSESSY). The Guanylate kinase-like domain occupies 714 to 889 (TRPVIILGPM…IYNQVKQIIE (176 aa)).

It belongs to the MAGUK family. As to quaternary structure, homotetramer. Interacts (via guanylate kinase-like domain) with DLGAP1, DLGAP2, DLGAP3, DLGAP4 and MAP1A. Interacts (via guanylate kinase-like domain) with KIF13B. May interact with HTR2A. Interacts (via PDZ domains) with GRIA1. Interacts (via PDZ domains) with GRIN2A. Interacts (via PDZ domains) with KCND2 and KCND3. Interacts (via PDZ domains) with KCNA1, KCNA2, KCNA3 and KCNA4. Interacts (via PDZ domains) with ADGRA3. Interacts with KCNF1. Interacts with CAMK2. Interacts with cytoskeleton-associated protein EPB41. Interacts with cytoskeleton-associated protein EZR. Found in a complex with KCNA5 and CAV3. Found in a complex with APC and CTNNB1. Interacts (via PDZ domains) with APC. Interacts with CDH1 through binding to PIK3R1. Forms multiprotein complexes with CASK, LIN7A, LIN7B, LIN7C, APBA1, and KCNJ12. Interacts with TOPK. Forms a tripartite complex composed of DLG1, MPP7 and LIN7 (LIN7A or LIN7C). May interact with TJAP1. Interacts with PTEN. Interacts with FRMPD4 (via C-terminus). Interacts with LRFN1, LRFN2 and LRFN4. Interacts with SFPQ. Interacts (via PDZ domains) with ADGRA2 (via PDZ-binding motif). Interacts with ADAM10; this interaction recruits ADAM10 to the cell membrane during long-term depression in hippocampal neurons. Interacts with DGKI (via PDZ-binding motif). Interacts (via PDZ domains) with MARCHF2 (via PDZ domain); the interaction leads to DLG1 ubiqtuitination and degradation. Interacts (via N-terminus) with MPP3; this interaction connects CADM1 with DLG1 and links CADM1 with the regulatory subunit of phosphoinositide-3-kinase (PI3K) by forming a multiprotein complex and participates in cell spreading. (Microbial infection) Interacts with HTLV-1 protein Tax. In terms of assembly, (Microbial infection) Interacts (via PDZ domains 1 and 2) with influenza A virus protein NS1; the interaction results in the translocation of DLG1 from the cell membrane to perinuclear puncta. Acts as a scaffold protein to facilitate the interaction between LIN7C and influenza A virus protein NS1; the interaction facilitates translocation of LIN7C to cytoplasmic puncta. As to quaternary structure, (Microbial infection) Interacts with human papillomavirus 18/HPV-18 protein E6. Phosphorylated by MAPK12. Phosphorylation of Ser-232 regulates association with GRIN2A. Post-translationally, ubiquitinated; by MARCHF2 which results in its degradation. In terms of tissue distribution, abundantly expressed in atrial myocardium (at protein level). Expressed in lung fibroblasts, cervical epithelial and B-cells (at protein level). Expressed in the brain (at protein level). Widely expressed, with isoforms displaying different expression profiles.

Its subcellular location is the cell membrane. The protein localises to the basolateral cell membrane. It localises to the endoplasmic reticulum membrane. The protein resides in the postsynaptic density. It is found in the synapse. Its subcellular location is the sarcolemma. The protein localises to the apical cell membrane. It localises to the cell junction. The protein resides in the cytoplasm. Essential multidomain scaffolding protein required for normal development. Recruits channels, receptors and signaling molecules to discrete plasma membrane domains in polarized cells. Promotes epithelial cell layer barrier function via maintaining cell-cell adhesion. May also play a role in adherens junction assembly, signal transduction, cell proliferation, synaptogenesis and lymphocyte activation. Regulates the excitability of cardiac myocytes by modulating the functional expression of Kv4 channels. Functional regulator of Kv1.5 channel. During long-term depression in hippocampal neurons, it recruits ADAM10 to the plasma membrane. The chain is Disks large homolog 1 from Homo sapiens (Human).